A 463-amino-acid polypeptide reads, in one-letter code: Probable glycosyltransferase 3 (463 aa).

The tract at residues 1–20 (MAVTGGGRPAARQQAARGKQ) is disordered. Residues 1–24 (MAVTGGGRPAARQQAARGKQMQRT) lie on the Cytoplasmic side of the membrane. The segment covering 9–20 (PAARQQAARGKQ) has biased composition (low complexity). The chain crosses the membrane as a helical; Signal-anchor for type II membrane protein span at residues 25-47 (FNNVKITLICGFITLLVLRGTVG). The Lumenal portion of the chain corresponds to 48-463 (INLLTYGVGG…ALKMDAKIES (416 aa)). Residues 82–125 (EIRSDTDDDDDDEEEEPLGVDASTTTTTNSTTTTATAARRRSSN) form a disordered region. Residues 87–99 (TDDDDDDEEEEPL) are compositionally biased toward acidic residues. The segment covering 103–118 (ASTTTTTNSTTTTATA) has biased composition (low complexity). 3 N-linked (GlcNAc...) asparagine glycosylation sites follow: N110, N125, and N442.

Belongs to the glycosyltransferase 34 family.

The protein resides in the golgi apparatus membrane. Functionally, probable glycosyltransferase that may be involved in the biosynthesis of xyloglucan. The polypeptide is Probable glycosyltransferase 3 (Oryza sativa subsp. indica (Rice)).